Consider the following 266-residue polypeptide: GTP cyclohydrolase FolE2 1 (266 aa).

It belongs to the GTP cyclohydrolase IV family.

The enzyme catalyses GTP + H2O = 7,8-dihydroneopterin 3'-triphosphate + formate + H(+). It participates in cofactor biosynthesis; 7,8-dihydroneopterin triphosphate biosynthesis; 7,8-dihydroneopterin triphosphate from GTP: step 1/1. In terms of biological role, converts GTP to 7,8-dihydroneopterin triphosphate. The sequence is that of GTP cyclohydrolase FolE2 1 from Dechloromonas aromatica (strain RCB).